A 65-amino-acid polypeptide reads, in one-letter code: Small ribosomal subunit protein eS27 (65 aa).

Zn(2+)-binding residues include Cys-20, Cys-23, Cys-39, and Cys-42. A C4-type zinc finger spans residues 20-42 (CIDCGNEQIVFSHPATRVRCNVC).

This sequence belongs to the eukaryotic ribosomal protein eS27 family. As to quaternary structure, part of the 30S ribosomal subunit. Requires Zn(2+) as cofactor.

The polypeptide is Small ribosomal subunit protein eS27 (Pyrococcus abyssi (strain GE5 / Orsay)).